Here is a 550-residue protein sequence, read N- to C-terminus: Chaperonin GroEL (550 aa).

Residues 30–33, Lys-51, 87–91, Gly-415, 479–481, and Asp-495 each bind ATP; these read TLGP, DGTTT, and NAA.

It belongs to the chaperonin (HSP60) family. Forms a cylinder of 14 subunits composed of two heptameric rings stacked back-to-back. Interacts with the co-chaperonin GroES.

Its subcellular location is the cytoplasm. The catalysed reaction is ATP + H2O + a folded polypeptide = ADP + phosphate + an unfolded polypeptide.. Together with its co-chaperonin GroES, plays an essential role in assisting protein folding. The GroEL-GroES system forms a nano-cage that allows encapsulation of the non-native substrate proteins and provides a physical environment optimized to promote and accelerate protein folding. The polypeptide is Chaperonin GroEL (Polynucleobacter asymbioticus (strain DSM 18221 / CIP 109841 / QLW-P1DMWA-1) (Polynucleobacter necessarius subsp. asymbioticus)).